A 414-amino-acid chain; its full sequence is Chromobox protein homolog 6 (414 aa).

Residues 11–69 (FAAESIIKRRIRKGRIEYLVKWKGWAIKYSTWEPEENILDSRLIAAFEQKERERELYGP) enclose the Chromo domain. Serine 107 is modified (phosphoserine). Disordered regions lie at residues 127–152 (HRMS…PISP), 267–308 (APFD…VPNW), and 344–365 (ALEP…PEMS). Positions 267–287 (APFDAHSSSSSGCPSPTLQSS) are enriched in low complexity.

Component of a PRC1-like complex. Distinct PRC1-like core complexes are composed of a RING1 subunit (RING1B or RING1A), one of the six PCGF proteins (PCGF1-6), one PHC protein (PHC1-3) and one of the CBX proteins (CBX2, CBX4, CBX6, CBX7 or CBX8). Interacts with PCGF1, PCGF2, PCGF3, BMI1, PCGF5, PCGF6, RING1 and RNF2. May interact with H3C15 and H3C1. Interacts (via chromodomain) with single-stranded RNA (ssRNA). Post-translationally, ubiquitinated. Ubiquitination regulates the function of the Polycomb group (PcG) multiprotein PRC1-like complex. Deubiquitinated by USP26. As to expression, expressed in mouse embryonic stem cells.

Its subcellular location is the nucleus. It localises to the chromosome. Functionally, component of a Polycomb group (PcG) multiprotein PRC1-like complex, a complex class required to maintain the transcriptionally repressive state of many genes, including Hox genes, throughout development. PcG PRC1 complex acts via chromatin remodeling and modification of histones; it mediates monoubiquitination of histone H2A 'Lys-119', rendering chromatin heritably changed in its expressibility. Possibly contributes to the target selectivity of the PRC1 complex by binding specific regions of chromatin. Recruitment to chromatin might occur in an H3K27me3-independent fashion. May have a PRC1-independent function in embryonic stem cells. In Mus musculus (Mouse), this protein is Chromobox protein homolog 6 (Cbx6).